The following is a 68-amino-acid chain: Probable tautomerase Cj0270 (68 aa).

P2 functions as the Proton acceptor; via imino nitrogen in the catalytic mechanism.

Belongs to the 4-oxalocrotonate tautomerase family.

The protein is Probable tautomerase Cj0270 of Campylobacter jejuni subsp. jejuni serotype O:2 (strain ATCC 700819 / NCTC 11168).